The following is a 429-amino-acid chain: Enolase (429 aa).

Gln-168 is a (2R)-2-phosphoglycerate binding site. Glu-210 functions as the Proton donor in the catalytic mechanism. Residues Asp-247, Glu-288, and Asp-315 each contribute to the Mg(2+) site. (2R)-2-phosphoglycerate-binding residues include Lys-340, Arg-369, Ser-370, and Lys-391. Lys-340 (proton acceptor) is an active-site residue.

It belongs to the enolase family. Mg(2+) serves as cofactor.

The protein localises to the cytoplasm. It localises to the secreted. The protein resides in the cell surface. The enzyme catalyses (2R)-2-phosphoglycerate = phosphoenolpyruvate + H2O. It participates in carbohydrate degradation; glycolysis; pyruvate from D-glyceraldehyde 3-phosphate: step 4/5. Catalyzes the reversible conversion of 2-phosphoglycerate (2-PG) into phosphoenolpyruvate (PEP). It is essential for the degradation of carbohydrates via glycolysis. The sequence is that of Enolase from Nostoc punctiforme (strain ATCC 29133 / PCC 73102).